Reading from the N-terminus, the 1422-residue chain is YEATS domain-containing protein 2 (1422 aa).

Lys-9 participates in a covalent cross-link: Glycyl lysine isopeptide (Lys-Gly) (interchain with G-Cter in SUMO2). Residues 47–80 (KEQFALEMKNKEHEIEVIDQRLIEARRMMDKLRA) adopt a coiled-coil conformation. Lys-113 participates in a covalent cross-link: Glycyl lysine isopeptide (Lys-Gly) (interchain with G-Cter in SUMO2). Residues 117–198 (ESPSRSSSPA…KTEQRNADLT (82 aa)) form a disordered region. Phosphoserine is present on residues Ser-118, Ser-120, and Ser-157. A compositionally biased stretch (polar residues) spans 119-148 (PSRSSSPANQRAETPSANHSESDSLSQHND). Residues 149–165 (FLSDKDNNSNMDIEERL) show a composition bias toward basic and acidic residues. Over residues 166-176 (SNNMEQRPSRN) the composition is skewed to polar residues. A compositionally biased stretch (basic and acidic residues) spans 177 to 198 (TGRDTSRITGSHKTEQRNADLT). Residue Lys-189 forms a Glycyl lysine isopeptide (Lys-Gly) (interchain with G-Cter in SUMO2) linkage. One can recognise a YEATS domain in the interval 200 to 345 (ETSRLFVKKT…EDCIYPQSSE (146 aa)). 2 histone H3K27cr binding regions span residues 259 to 261 (HPS) and 282 to 284 (WGE). A Glycyl lysine isopeptide (Lys-Gly) (interchain with G-Cter in SUMO2) cross-link involves residue Lys-370. Thr-407 carries the post-translational modification Phosphothreonine. A phosphoserine mark is found at Ser-447, Ser-463, Ser-465, Ser-471, and Ser-473. A disordered region spans residues 465 to 486 (SPISTPSPSPLPRTPTSTPVHV). The residue at position 478 (Thr-478) is a Phosphothreonine. Residue Lys-487 forms a Glycyl lysine isopeptide (Lys-Gly) (interchain with G-Cter in SUMO2) linkage. Residues 513–535 (TTPSTGSPTNKISTASQVSQGTG) are compositionally biased toward polar residues. The tract at residues 513–540 (TTPSTGSPTNKISTASQVSQGTGSPVPK) is disordered. Ser-536 carries the phosphoserine modification. Lys-552 is covalently cross-linked (Glycyl lysine isopeptide (Lys-Gly) (interchain with G-Cter in SUMO2)). Ser-575 is modified (phosphoserine). Lys-592 participates in a covalent cross-link: Glycyl lysine isopeptide (Lys-Gly) (interchain with G-Cter in SUMO2). Ser-627 carries the post-translational modification Phosphoserine. Glycyl lysine isopeptide (Lys-Gly) (interchain with G-Cter in SUMO2) cross-links involve residues Lys-649 and Lys-773. The disordered stretch occupies residues 794–842 (GSAASGGSGAGGGGGGGGGGGSGSGGGGSTGGGGGTAGGGTQSTAGPGG). The segment covering 797–842 (ASGGSGAGGGGGGGGGGGSGSGGGGSTGGGGGTAGGGTQSTAGPGG) has biased composition (gly residues). A Glycyl lysine isopeptide (Lys-Gly) (interchain with G-Cter in SUMO2) cross-link involves residue Lys-923. Lys-1110 participates in a covalent cross-link: Glycyl lysine isopeptide (Lys-Gly) (interchain with G-Cter in SUMO1); alternate. Lys-1110 is covalently cross-linked (Glycyl lysine isopeptide (Lys-Gly) (interchain with G-Cter in SUMO2); alternate). Residue Lys-1130 forms a Glycyl lysine isopeptide (Lys-Gly) (interchain with G-Cter in SUMO2) linkage. Thr-1219 carries the phosphothreonine modification. Glycyl lysine isopeptide (Lys-Gly) (interchain with G-Cter in SUMO2) cross-links involve residues Lys-1222 and Lys-1285.

Component of the ADA2A-containing complex (ATAC), composed of KAT14, KAT2A, TADA2L, TADA3L, ZZ3, MBIP, WDR5, YEATS2, SGF29 and DR1.

Its subcellular location is the nucleus. Its function is as follows. Chromatin reader component of the ATAC complex, a complex with histone acetyltransferase activity on histones H3 and H4. YEATS2 specifically recognizes and binds histone H3 crotonylated at 'Lys-27' (H3K27cr). Crotonylation marks active promoters and enhancers and confers resistance to transcriptional repressors. In Homo sapiens (Human), this protein is YEATS domain-containing protein 2.